Here is a 363-residue protein sequence, read N- to C-terminus: UDP-N-acetylglucosamine--N-acetylmuramyl-(pentapeptide) pyrophosphoryl-undecaprenol N-acetylglucosamine transferase (363 aa).

UDP-N-acetyl-alpha-D-glucosamine contacts are provided by residues 14–16, N122, R163, S190, and Q285; that span reads TGG.

This sequence belongs to the glycosyltransferase 28 family. MurG subfamily.

The protein localises to the cell inner membrane. The catalysed reaction is di-trans,octa-cis-undecaprenyl diphospho-N-acetyl-alpha-D-muramoyl-L-alanyl-D-glutamyl-meso-2,6-diaminopimeloyl-D-alanyl-D-alanine + UDP-N-acetyl-alpha-D-glucosamine = di-trans,octa-cis-undecaprenyl diphospho-[N-acetyl-alpha-D-glucosaminyl-(1-&gt;4)]-N-acetyl-alpha-D-muramoyl-L-alanyl-D-glutamyl-meso-2,6-diaminopimeloyl-D-alanyl-D-alanine + UDP + H(+). Its pathway is cell wall biogenesis; peptidoglycan biosynthesis. Cell wall formation. Catalyzes the transfer of a GlcNAc subunit on undecaprenyl-pyrophosphoryl-MurNAc-pentapeptide (lipid intermediate I) to form undecaprenyl-pyrophosphoryl-MurNAc-(pentapeptide)GlcNAc (lipid intermediate II). The protein is UDP-N-acetylglucosamine--N-acetylmuramyl-(pentapeptide) pyrophosphoryl-undecaprenol N-acetylglucosamine transferase of Prochlorococcus marinus (strain MIT 9301).